Reading from the N-terminus, the 358-residue chain is MKPSILEKLQQLGDRLEEVTHLLGQPEATSDMDNYRKLTREHAELTPVVEVFQNYRLAQSDLADAEEMLSDPEMKDFAAEEIEAAKAKIDELDTELQKLLLPKDADDDKNIFIEIRAGTGGDEAALFAGDLLRMYSRYAERNRWQVEIVSANESELGGYKEVIARIVGLGAYSRLKFESGGHRVQRVPATESQGRIHTSACTVAVMPEADELEDIELNPADLRTDTFRASGAGGQHINKTDSAVRITHLPTGMVVECQDGRSQHANKAQAMKVLAARLNDAQKREVQAKEAAERKSLIGSGDRSERIRTYNYPQGRVTDHRINLTLHKLDFVMDGDLAEITDALIAEHQAELLAAMGD.

Q235 bears the N5-methylglutamine mark.

The protein belongs to the prokaryotic/mitochondrial release factor family. Methylated by PrmC. Methylation increases the termination efficiency of RF1.

It localises to the cytoplasm. Its function is as follows. Peptide chain release factor 1 directs the termination of translation in response to the peptide chain termination codons UAG and UAA. In Neisseria gonorrhoeae (strain ATCC 700825 / FA 1090), this protein is Peptide chain release factor 1.